A 435-amino-acid chain; its full sequence is Ornithine decarboxylase (435 aa).

An N6-(pyridoxal phosphate)lysine modification is found at Lys98. Pyridoxal 5'-phosphate is bound by residues Ser230, Gly268, and 301–304 (EPGR). 344–345 (YD) contacts substrate. Catalysis depends on Cys380, which acts as the Proton donor; shared with dimeric partner. Asp381 is a substrate binding site. Position 409 (Tyr409) interacts with pyridoxal 5'-phosphate.

The protein belongs to the Orn/Lys/Arg decarboxylase class-II family. As to quaternary structure, homodimer. Only the dimer is catalytically active, as the active sites are constructed of residues from both monomers. Pyridoxal 5'-phosphate is required as a cofactor.

The enzyme catalyses L-ornithine + H(+) = putrescine + CO2. Its pathway is amine and polyamine biosynthesis; putrescine biosynthesis via L-ornithine pathway; putrescine from L-ornithine: step 1/1. Its activity is regulated as follows. Inhibited by antizyme (AZ) in response to polyamine levels. AZ inhibits the assembly of the functional homodimer by binding to ODC monomers and targeting them for ubiquitin-independent proteolytic destruction by the 26S proteasome. Catalyzes the first and rate-limiting step of polyamine biosynthesis that converts ornithine into putrescine, which is the precursor for the polyamines, spermidine and spermine. Polyamines are essential for cell proliferation and are implicated in cellular processes, ranging from DNA replication to apoptosis. The sequence is that of Ornithine decarboxylase (ODC) from Capsicum annuum (Capsicum pepper).